The chain runs to 20 residues: Brevinin-1T (20 aa).

An intrachain disulfide couples Cys14 to Cys20.

This sequence belongs to the frog skin active peptide (FSAP) family. Brevinin subfamily. Expressed by the skin glands.

Its subcellular location is the secreted. Functionally, antibacterial activity against representative Gram-negative and Gram-positive bacteria and exhibits a very high hemolytic activity. The polypeptide is Brevinin-1T (Rana temporaria (European common frog)).